The following is a 575-amino-acid chain: Dihydroxy-acid dehydratase (575 aa).

Cys-64 is a binding site for [2Fe-2S] cluster. Asp-96 is a Mg(2+) binding site. Cys-137 provides a ligand contact to [2Fe-2S] cluster. Mg(2+)-binding residues include Asp-138 and Lys-139. Lys-139 carries the post-translational modification N6-carboxylysine. Cys-214 serves as a coordination point for [2Fe-2S] cluster. Mg(2+) is bound at residue Glu-465. Ser-491 acts as the Proton acceptor in catalysis.

Belongs to the IlvD/Edd family. In terms of assembly, homodimer. Requires [2Fe-2S] cluster as cofactor. It depends on Mg(2+) as a cofactor.

The catalysed reaction is (2R)-2,3-dihydroxy-3-methylbutanoate = 3-methyl-2-oxobutanoate + H2O. It catalyses the reaction (2R,3R)-2,3-dihydroxy-3-methylpentanoate = (S)-3-methyl-2-oxopentanoate + H2O. It functions in the pathway amino-acid biosynthesis; L-isoleucine biosynthesis; L-isoleucine from 2-oxobutanoate: step 3/4. It participates in amino-acid biosynthesis; L-valine biosynthesis; L-valine from pyruvate: step 3/4. Functionally, functions in the biosynthesis of branched-chain amino acids. Catalyzes the dehydration of (2R,3R)-2,3-dihydroxy-3-methylpentanoate (2,3-dihydroxy-3-methylvalerate) into 2-oxo-3-methylpentanoate (2-oxo-3-methylvalerate) and of (2R)-2,3-dihydroxy-3-methylbutanoate (2,3-dihydroxyisovalerate) into 2-oxo-3-methylbutanoate (2-oxoisovalerate), the penultimate precursor to L-isoleucine and L-valine, respectively. This Mycobacterium bovis (strain ATCC BAA-935 / AF2122/97) protein is Dihydroxy-acid dehydratase.